A 264-amino-acid chain; its full sequence is Thymidylate synthase 2 (264 aa).

Arginine 21 contributes to the dUMP binding site. Residue histidine 51 coordinates (6R)-5,10-methylene-5,6,7,8-tetrahydrofolate. Position 126-127 (126-127 (RR)) interacts with dUMP. Catalysis depends on cysteine 146, which acts as the Nucleophile. DUMP is bound by residues 166–169 (RSAD), asparagine 177, and 207–209 (HIY). Aspartate 169 lines the (6R)-5,10-methylene-5,6,7,8-tetrahydrofolate pocket. A (6R)-5,10-methylene-5,6,7,8-tetrahydrofolate-binding site is contributed by serine 263.

The protein belongs to the thymidylate synthase family. Bacterial-type ThyA subfamily. In terms of assembly, homodimer.

Its subcellular location is the cytoplasm. It catalyses the reaction dUMP + (6R)-5,10-methylene-5,6,7,8-tetrahydrofolate = 7,8-dihydrofolate + dTMP. Its pathway is pyrimidine metabolism; dTTP biosynthesis. In terms of biological role, catalyzes the reductive methylation of 2'-deoxyuridine-5'-monophosphate (dUMP) to 2'-deoxythymidine-5'-monophosphate (dTMP) while utilizing 5,10-methylenetetrahydrofolate (mTHF) as the methyl donor and reductant in the reaction, yielding dihydrofolate (DHF) as a by-product. This enzymatic reaction provides an intracellular de novo source of dTMP, an essential precursor for DNA biosynthesis. The sequence is that of Thymidylate synthase 2 from Bacillus subtilis (strain 168).